The sequence spans 340 residues: Phospho-N-acetylmuramoyl-pentapeptide-transferase (340 aa).

Helical transmembrane passes span 3–23, 53–73, 79–99, 119–139, 144–164, 176–196, 200–220, 227–247, 250–270, and 315–335; these read MSLI…PHFI, GGTV…FHVF, AYGA…IGFL, MALQ…PSGT, IGGL…FWIV, IDGL…IIAF, ELAI…FFVF, VFMG…ISIA, VEWT…SVML, and VDAF…WMVL.

It belongs to the glycosyltransferase 4 family. MraY subfamily. Mg(2+) serves as cofactor.

The protein localises to the cell membrane. The enzyme catalyses UDP-N-acetyl-alpha-D-muramoyl-L-alanyl-gamma-D-glutamyl-L-lysyl-D-alanyl-D-alanine + di-trans,octa-cis-undecaprenyl phosphate = Mur2Ac(oyl-L-Ala-gamma-D-Glu-L-Lys-D-Ala-D-Ala)-di-trans,octa-cis-undecaprenyl diphosphate + UMP. The protein operates within cell wall biogenesis; peptidoglycan biosynthesis. Functionally, catalyzes the initial step of the lipid cycle reactions in the biosynthesis of the cell wall peptidoglycan: transfers peptidoglycan precursor phospho-MurNAc-pentapeptide from UDP-MurNAc-pentapeptide onto the lipid carrier undecaprenyl phosphate, yielding undecaprenyl-pyrophosphoryl-MurNAc-pentapeptide, known as lipid I. The protein is Phospho-N-acetylmuramoyl-pentapeptide-transferase of Streptococcus thermophilus (strain ATCC BAA-250 / LMG 18311).